The chain runs to 79 residues: Sec-independent protein translocase protein TatA (79 aa).

The chain crosses the membrane as a helical span at residues 1–21 (MGGFTSIWHWVIVLLVIVLLF). The segment at 48–79 (EEEAKNEPKTLDAQATQTKVHESSEIKSKQES) is disordered. Over residues 66–79 (KVHESSEIKSKQES) the composition is skewed to basic and acidic residues.

It belongs to the TatA/E family. The Tat system comprises two distinct complexes: a TatABC complex, containing multiple copies of TatA, TatB and TatC subunits, and a separate TatA complex, containing only TatA subunits. Substrates initially bind to the TatABC complex, which probably triggers association of the separate TatA complex to form the active translocon.

Its subcellular location is the cell inner membrane. In terms of biological role, part of the twin-arginine translocation (Tat) system that transports large folded proteins containing a characteristic twin-arginine motif in their signal peptide across membranes. TatA could form the protein-conducting channel of the Tat system. The polypeptide is Sec-independent protein translocase protein TatA (Helicobacter pylori (strain ATCC 700392 / 26695) (Campylobacter pylori)).